The sequence spans 65 residues: Conotoxin VnMLCL-031 (65 aa).

The first 19 residues, 1–19 (MLCLPXFIILLLLASPAAP), serve as a signal peptide directing secretion. Positions 20-43 (NPLQTRXQSNLIRAGPEDANIKTX) are excised as a propeptide. Ile-64 bears the Isoleucine amide mark.

This sequence belongs to the conotoxin T superfamily. As to expression, expressed by the venom duct.

It is found in the secreted. This Conus ventricosus (Mediterranean cone) protein is Conotoxin VnMLCL-031.